The primary structure comprises 1178 residues: DNA-directed RNA polymerase subunit beta' (1178 aa).

Residues cysteine 60, cysteine 62, cysteine 75, and cysteine 78 each contribute to the Zn(2+) site. Residues aspartate 450, aspartate 452, and aspartate 454 each coordinate Mg(2+). Zn(2+) is bound by residues cysteine 795, cysteine 869, cysteine 876, and cysteine 879.

This sequence belongs to the RNA polymerase beta' chain family. As to quaternary structure, the RNAP catalytic core consists of 2 alpha, 1 beta, 1 beta' and 1 omega subunit. When a sigma factor is associated with the core the holoenzyme is formed, which can initiate transcription. It depends on Mg(2+) as a cofactor. Requires Zn(2+) as cofactor.

The catalysed reaction is RNA(n) + a ribonucleoside 5'-triphosphate = RNA(n+1) + diphosphate. In terms of biological role, DNA-dependent RNA polymerase catalyzes the transcription of DNA into RNA using the four ribonucleoside triphosphates as substrates. The chain is DNA-directed RNA polymerase subunit beta' from Clostridium botulinum (strain Loch Maree / Type A3).